The chain runs to 776 residues: 5-methyltetrahydropteroyltriglutamate--homocysteine methyltransferase (776 aa).

5-methyltetrahydropteroyltri-L-glutamate contacts are provided by residues 16–19 and lysine 112; that span reads RELK. Residues 435–437 and glutamate 488 each bind L-homocysteine; that span reads IGS. Residues 435 to 437 and glutamate 488 each bind L-methionine; that span reads IGS. 5-methyltetrahydropteroyltri-L-glutamate-binding positions include 519–520 and tryptophan 565; that span reads RC. Aspartate 603 lines the L-homocysteine pocket. An L-methionine-binding site is contributed by aspartate 603. Glutamate 609 is a binding site for 5-methyltetrahydropteroyltri-L-glutamate. Residues histidine 645, cysteine 647, and glutamate 669 each contribute to the Zn(2+) site. Histidine 698 (proton donor) is an active-site residue. Cysteine 730 provides a ligand contact to Zn(2+).

This sequence belongs to the vitamin-B12 independent methionine synthase family. It depends on Zn(2+) as a cofactor.

It catalyses the reaction 5-methyltetrahydropteroyltri-L-glutamate + L-homocysteine = tetrahydropteroyltri-L-glutamate + L-methionine. The protein operates within amino-acid biosynthesis; L-methionine biosynthesis via de novo pathway; L-methionine from L-homocysteine (MetE route): step 1/1. Its function is as follows. Catalyzes the transfer of a methyl group from 5-methyltetrahydrofolate to homocysteine resulting in methionine formation. The protein is 5-methyltetrahydropteroyltriglutamate--homocysteine methyltransferase of Ralstonia pickettii (strain 12J).